A 921-amino-acid chain; its full sequence is Isoleucine--tRNA ligase (921 aa).

Positions 57–67 match the 'HIGH' region motif; sequence PYANGDIHMGH. Position 552 (glutamate 552) interacts with L-isoleucyl-5'-AMP. Residues 593–597 carry the 'KMSKS' region motif; the sequence is KMSKS. Residue lysine 596 coordinates ATP. The Zn(2+) site is built by cysteine 888, cysteine 891, cysteine 908, and cysteine 911.

This sequence belongs to the class-I aminoacyl-tRNA synthetase family. IleS type 1 subfamily. As to quaternary structure, monomer. It depends on Zn(2+) as a cofactor.

It localises to the cytoplasm. The enzyme catalyses tRNA(Ile) + L-isoleucine + ATP = L-isoleucyl-tRNA(Ile) + AMP + diphosphate. Functionally, catalyzes the attachment of isoleucine to tRNA(Ile). As IleRS can inadvertently accommodate and process structurally similar amino acids such as valine, to avoid such errors it has two additional distinct tRNA(Ile)-dependent editing activities. One activity is designated as 'pretransfer' editing and involves the hydrolysis of activated Val-AMP. The other activity is designated 'posttransfer' editing and involves deacylation of mischarged Val-tRNA(Ile). The sequence is that of Isoleucine--tRNA ligase from Bacillus cytotoxicus (strain DSM 22905 / CIP 110041 / 391-98 / NVH 391-98).